The sequence spans 448 residues: Receptor homology region, transmembrane domain- and RING domain-containing protein 2 (448 aa).

A signal peptide spans 1-20 (MNRALVLLLYVCTVSCLASS). Residues 21-163 (KVILMRNNIT…IPSFENSAWS (143 aa)) are Lumenal-facing. 2 N-linked (GlcNAc...) asparagine glycosylation sites follow: Asn-28 and Asn-74. The PA domain maps to 60-144 (DACQNLMNKP…ETGEVLKEYA (85 aa)). A disulfide bridge links Cys-62 with Cys-87. A helical membrane pass occupies residues 164–184 (IMAVSFISLLAMSAVLATCFF). Residues 185–448 (VRRHRIRRRT…YASANSLPDC (264 aa)) are Cytoplasmic-facing. The RING-type; atypical zinc-finger motif lies at 232–274 (CAICLEDYTVGDKLRLLPCCHKFHAACVDSWLTSWRTFCPVCK). Over residues 344 to 378 (QSSSNRRSPPISVSRSSVDLRQQAASPSPSPSQRS) the composition is skewed to low complexity. 2 disordered regions span residues 344–380 (QSSSNRRSPPISVSRSSVDLRQQAASPSPSPSQRSYI) and 402–424 (MSPYRPSPSNASPAMAGSSNYPL). Polar residues predominate over residues 408 to 423 (SPSNASPAMAGSSNYP).

It localises to the protein storage vacuole membrane. The protein resides in the golgi apparatus membrane. Functionally, involved in the trafficking of vacuolar proteins. May function as a sorting receptor for protein trafficking to the protein storage vacuole (PSV). The sequence is that of Receptor homology region, transmembrane domain- and RING domain-containing protein 2 (RMR2) from Arabidopsis thaliana (Mouse-ear cress).